The chain runs to 271 residues: Shikimate dehydrogenase (NADP(+)) (271 aa).

Shikimate-binding positions include 14–16 and Thr-61; that span reads SQS. The Proton acceptor role is filled by Lys-65. Shikimate-binding residues include Asn-86 and Asp-101. Residues 125 to 129, 148 to 153, and Met-212 contribute to the NADP(+) site; these read GAGGA and NRTHAR. Residue Tyr-214 participates in shikimate binding. Gly-236 is an NADP(+) binding site.

It belongs to the shikimate dehydrogenase family. As to quaternary structure, homodimer.

The enzyme catalyses shikimate + NADP(+) = 3-dehydroshikimate + NADPH + H(+). It functions in the pathway metabolic intermediate biosynthesis; chorismate biosynthesis; chorismate from D-erythrose 4-phosphate and phosphoenolpyruvate: step 4/7. Its function is as follows. Involved in the biosynthesis of the chorismate, which leads to the biosynthesis of aromatic amino acids. Catalyzes the reversible NADPH linked reduction of 3-dehydroshikimate (DHSA) to yield shikimate (SA). This Edwardsiella ictaluri (strain 93-146) protein is Shikimate dehydrogenase (NADP(+)).